The sequence spans 246 residues: MRLIIATCAVDYVGRLEAHLPRADRLIMVKADGAVSIHADDRAYKPLNWMTPPCTTTEYRRAEALAEATDGKDPFLTLPELEDEDVEALWVVENPKGEQLRIQLFAVHSDQNFDLGEDPGLQKDGVEAHLQELLAEQIEILGEGYSLVRREYPTPIGPVDILTKDATGATVAVEIKRRGNIDGVEQLTRYVELLNRDELLAPVTGVFAAQEIKPQARTLAEDRGIRCVTLDYAAMRGTDDSEFRLF.

Belongs to the NucS endonuclease family.

Its subcellular location is the cytoplasm. In terms of biological role, cleaves both 3' and 5' ssDNA extremities of branched DNA structures. This chain is Endonuclease NucS, found in Corynebacterium urealyticum (strain ATCC 43042 / DSM 7109).